We begin with the raw amino-acid sequence, 132 residues long: Glycerol-3-phosphate cytidylyltransferase (132 aa).

CTP-binding positions include Thr-9–Tyr-10 and His-14–His-17. Lys-44 provides a ligand contact to substrate. Lys-46 is a binding site for CTP. Lys-77 contributes to the substrate binding site. Arg-113 to Thr-120 is a CTP binding site.

Belongs to the cytidylyltransferase family. In terms of assembly, homotetramer or homodimer.

It is found in the cytoplasm. It catalyses the reaction sn-glycerol 3-phosphate + CTP + H(+) = CDP-glycerol + diphosphate. Its pathway is cell wall biogenesis; poly(ribitol phosphate) teichoic acid biosynthesis. Functionally, catalyzes the transfer of the cytidylyl group of CTP to sn-glycerol 3-phosphate so the activated glycerol 3-phosphate can be used for teichoic acid synthesis, via incorporation into both the linkage unit by TarB and TarF. The protein is Glycerol-3-phosphate cytidylyltransferase of Staphylococcus aureus (strain NCTC 8325 / PS 47).